Here is a 256-residue protein sequence, read N- to C-terminus: Small ribosomal subunit protein uS2 (256 aa).

It belongs to the universal ribosomal protein uS2 family.

The protein is Small ribosomal subunit protein uS2 of Brucella melitensis biotype 1 (strain ATCC 23456 / CCUG 17765 / NCTC 10094 / 16M).